The primary structure comprises 379 residues: Subtilisin Carlsberg (379 aa).

The signal sequence occupies residues Met-1–Ala-29. A propeptide spanning residues Ala-30 to Leu-105 is cleaved from the precursor. The 59-residue stretch at Phe-44–Ala-102 folds into the Inhibitor I9 domain. Gln-107 is a Ca(2+) binding site. A Peptidase S8 domain is found at Pro-110–Ala-378. The active-site Charge relay system is the Asp-137. Asp-146 contacts Ca(2+). The active-site Charge relay system is His-168. Positions 179, 181, 183, 185, 273, 275, and 278 each coordinate Ca(2+). Catalysis depends on Ser-325, which acts as the Charge relay system.

This sequence belongs to the peptidase S8 family. The cofactor is Ca(2+).

The protein localises to the secreted. It catalyses the reaction Hydrolysis of proteins with broad specificity for peptide bonds, and a preference for a large uncharged residue in P1. Hydrolyzes peptide amides.. Inhibited by p-chlorophenyl and 1-naphthyl boronic acid derivatives. In terms of biological role, subtilisin is an extracellular alkaline serine protease, it catalyzes the hydrolysis of proteins and peptide amides. Shows high specificity for aromatic and hydrophobic amino acids in the P1 substrate position. May play an important role in the degradation of feather keratin. The polypeptide is Subtilisin Carlsberg (Bacillus licheniformis).